A 965-amino-acid polypeptide reads, in one-letter code: Iron-responsive element-binding protein 2 (965 aa).

Residues 142-170 are disordered; it reads NAPNPGGGEAQKPTAKLSPLKGQPRKLPC. Positions 514, 580, and 583 each coordinate [4Fe-4S] cluster.

Belongs to the aconitase/IPM isomerase family. The cofactor is [4Fe-4S] cluster. Ubiquitinated and degraded by the proteasome in presence of high level of iron and oxygen.

It is found in the cytoplasm. Its function is as follows. RNA-binding protein that binds to iron-responsive elements (IRES), which are stem-loop structures found in the 5'-UTR of ferritin, and delta aminolevulinic acid synthase mRNAs, and in the 3'-UTR of transferrin receptor mRNA. Binding to the IRE element in ferritin results in the repression of its mRNA translation. Binding of the protein to the transferrin receptor mRNA inhibits the degradation of this otherwise rapidly degraded mRNA. The polypeptide is Iron-responsive element-binding protein 2 (IREB2) (Gallus gallus (Chicken)).